A 450-amino-acid polypeptide reads, in one-letter code: Bifunctional protein GlmU (450 aa).

The pyrophosphorylase stretch occupies residues 1–226; sequence MLAVAVLAAG…PDEVNGINNR (226 aa). Residues 7-10, lysine 21, glutamine 73, and 78-79 contribute to the UDP-N-acetyl-alpha-D-glucosamine site; these read LAAG and GT. Aspartate 103 provides a ligand contact to Mg(2+). Residues glycine 140, glutamate 155, asparagine 170, and asparagine 224 each contribute to the UDP-N-acetyl-alpha-D-glucosamine site. Asparagine 224 provides a ligand contact to Mg(2+). Positions 227–247 are linker; it reads KQLAQCEGVLQQRLRDYWMDE. The tract at residues 248-450 is N-acetyltransferase; the sequence is GVTFVDPASC…TKDNWANRSI (203 aa). Residues arginine 329 and lysine 347 each coordinate UDP-N-acetyl-alpha-D-glucosamine. Histidine 359 functions as the Proton acceptor in the catalytic mechanism. The UDP-N-acetyl-alpha-D-glucosamine site is built by tyrosine 362 and asparagine 373. Residues alanine 376, 382 to 383, alanine 419, and arginine 436 each bind acetyl-CoA; that span reads NY.

The protein in the N-terminal section; belongs to the N-acetylglucosamine-1-phosphate uridyltransferase family. This sequence in the C-terminal section; belongs to the transferase hexapeptide repeat family. As to quaternary structure, homotrimer. Mg(2+) serves as cofactor.

It localises to the cytoplasm. The enzyme catalyses alpha-D-glucosamine 1-phosphate + acetyl-CoA = N-acetyl-alpha-D-glucosamine 1-phosphate + CoA + H(+). It carries out the reaction N-acetyl-alpha-D-glucosamine 1-phosphate + UTP + H(+) = UDP-N-acetyl-alpha-D-glucosamine + diphosphate. It participates in nucleotide-sugar biosynthesis; UDP-N-acetyl-alpha-D-glucosamine biosynthesis; N-acetyl-alpha-D-glucosamine 1-phosphate from alpha-D-glucosamine 6-phosphate (route II): step 2/2. The protein operates within nucleotide-sugar biosynthesis; UDP-N-acetyl-alpha-D-glucosamine biosynthesis; UDP-N-acetyl-alpha-D-glucosamine from N-acetyl-alpha-D-glucosamine 1-phosphate: step 1/1. It functions in the pathway bacterial outer membrane biogenesis; LPS lipid A biosynthesis. Functionally, catalyzes the last two sequential reactions in the de novo biosynthetic pathway for UDP-N-acetylglucosamine (UDP-GlcNAc). The C-terminal domain catalyzes the transfer of acetyl group from acetyl coenzyme A to glucosamine-1-phosphate (GlcN-1-P) to produce N-acetylglucosamine-1-phosphate (GlcNAc-1-P), which is converted into UDP-GlcNAc by the transfer of uridine 5-monophosphate (from uridine 5-triphosphate), a reaction catalyzed by the N-terminal domain. The polypeptide is Bifunctional protein GlmU (Synechococcus sp. (strain CC9902)).